Consider the following 302-residue polypeptide: Protoheme IX farnesyltransferase (302 aa).

9 helical membrane passes run 27-47 (VLTLVVFTGWCGLLAAPQSIH), 48-68 (PVLGFTAVLCIALGAGAAGAL), 97-117 (SALHFGVGLGIFSVLLMGLAL), 119-139 (VLAAAILAVSILFYVVVYTIW), 148-168 (IVIGGAAGAFPALIGWAAATG), 176-196 (LLFALVFLWTPPHFWALALFI), 219-239 (IQIMLYTVPMVIAAVAPWAMG), 240-260 (LTGAIYGIGASLLSALFLLLA), and 280-300 (LFGFSILYLFLIFGLVVADKV).

It belongs to the UbiA prenyltransferase family. Protoheme IX farnesyltransferase subfamily.

The protein localises to the cell inner membrane. The enzyme catalyses heme b + (2E,6E)-farnesyl diphosphate + H2O = Fe(II)-heme o + diphosphate. The protein operates within porphyrin-containing compound metabolism; heme O biosynthesis; heme O from protoheme: step 1/1. Its function is as follows. Converts heme B (protoheme IX) to heme O by substitution of the vinyl group on carbon 2 of heme B porphyrin ring with a hydroxyethyl farnesyl side group. In Rhizorhabdus wittichii (strain DSM 6014 / CCUG 31198 / JCM 15750 / NBRC 105917 / EY 4224 / RW1) (Sphingomonas wittichii), this protein is Protoheme IX farnesyltransferase.